The sequence spans 208 residues: Uridine kinase (208 aa).

Glycine 12 to threonine 19 provides a ligand contact to ATP.

This sequence belongs to the uridine kinase family.

It is found in the cytoplasm. It carries out the reaction uridine + ATP = UMP + ADP + H(+). The catalysed reaction is cytidine + ATP = CMP + ADP + H(+). Its pathway is pyrimidine metabolism; CTP biosynthesis via salvage pathway; CTP from cytidine: step 1/3. It participates in pyrimidine metabolism; UMP biosynthesis via salvage pathway; UMP from uridine: step 1/1. The sequence is that of Uridine kinase from Streptococcus equi subsp. equi (strain 4047).